The chain runs to 93 residues: Pyrimidine/purine nucleoside phosphorylase (93 aa).

This sequence belongs to the nucleoside phosphorylase PpnP family.

It catalyses the reaction a purine D-ribonucleoside + phosphate = a purine nucleobase + alpha-D-ribose 1-phosphate. The enzyme catalyses adenosine + phosphate = alpha-D-ribose 1-phosphate + adenine. The catalysed reaction is cytidine + phosphate = cytosine + alpha-D-ribose 1-phosphate. It carries out the reaction guanosine + phosphate = alpha-D-ribose 1-phosphate + guanine. It catalyses the reaction inosine + phosphate = alpha-D-ribose 1-phosphate + hypoxanthine. The enzyme catalyses thymidine + phosphate = 2-deoxy-alpha-D-ribose 1-phosphate + thymine. The catalysed reaction is uridine + phosphate = alpha-D-ribose 1-phosphate + uracil. It carries out the reaction xanthosine + phosphate = alpha-D-ribose 1-phosphate + xanthine. In terms of biological role, catalyzes the phosphorolysis of diverse nucleosides, yielding D-ribose 1-phosphate and the respective free bases. Can use uridine, adenosine, guanosine, cytidine, thymidine, inosine and xanthosine as substrates. Also catalyzes the reverse reactions. In Vibrio vulnificus (strain CMCP6), this protein is Pyrimidine/purine nucleoside phosphorylase.